Consider the following 457-residue polypeptide: Siroheme synthase (457 aa).

Positions 1 to 204 (MDHLPIFCQL…NDQKAITETT (204 aa)) are precorrin-2 dehydrogenase /sirohydrochlorin ferrochelatase. NAD(+) contacts are provided by residues 22 to 23 (DV) and 43 to 44 (LA). A Phosphoserine modification is found at Ser-128. Residues 216–457 (GEVVLVGAGP…RDKLNWFSNH (242 aa)) form a uroporphyrinogen-III C-methyltransferase region. Pro-225 provides a ligand contact to S-adenosyl-L-methionine. The Proton acceptor role is filled by Asp-248. The active-site Proton donor is the Lys-270. S-adenosyl-L-methionine is bound by residues 301–303 (GGD), Ile-306, 331–332 (TA), Met-382, and Gly-411.

This sequence in the N-terminal section; belongs to the precorrin-2 dehydrogenase / sirohydrochlorin ferrochelatase family. It in the C-terminal section; belongs to the precorrin methyltransferase family.

The catalysed reaction is uroporphyrinogen III + 2 S-adenosyl-L-methionine = precorrin-2 + 2 S-adenosyl-L-homocysteine + H(+). It catalyses the reaction precorrin-2 + NAD(+) = sirohydrochlorin + NADH + 2 H(+). It carries out the reaction siroheme + 2 H(+) = sirohydrochlorin + Fe(2+). The protein operates within cofactor biosynthesis; adenosylcobalamin biosynthesis; precorrin-2 from uroporphyrinogen III: step 1/1. Its pathway is cofactor biosynthesis; adenosylcobalamin biosynthesis; sirohydrochlorin from precorrin-2: step 1/1. It functions in the pathway porphyrin-containing compound metabolism; siroheme biosynthesis; precorrin-2 from uroporphyrinogen III: step 1/1. It participates in porphyrin-containing compound metabolism; siroheme biosynthesis; siroheme from sirohydrochlorin: step 1/1. The protein operates within porphyrin-containing compound metabolism; siroheme biosynthesis; sirohydrochlorin from precorrin-2: step 1/1. Multifunctional enzyme that catalyzes the SAM-dependent methylations of uroporphyrinogen III at position C-2 and C-7 to form precorrin-2 via precorrin-1. Then it catalyzes the NAD-dependent ring dehydrogenation of precorrin-2 to yield sirohydrochlorin. Finally, it catalyzes the ferrochelation of sirohydrochlorin to yield siroheme. In Escherichia fergusonii (strain ATCC 35469 / DSM 13698 / CCUG 18766 / IAM 14443 / JCM 21226 / LMG 7866 / NBRC 102419 / NCTC 12128 / CDC 0568-73), this protein is Siroheme synthase.